The following is a 385-amino-acid chain: GDP-D-glucose phosphorylase 1 (385 aa).

Histidine 218 (tele-GMP-histidine intermediate) is an active-site residue.

The protein belongs to the GDPGP1 family.

It is found in the cytoplasm. It catalyses the reaction GDP-alpha-D-glucose + phosphate = alpha-D-glucose 1-phosphate + GDP + H(+). Its function is as follows. Specific and highly efficient GDP-D-glucose phosphorylase regulating the levels of GDP-D-glucose in cells. In Homo sapiens (Human), this protein is GDP-D-glucose phosphorylase 1 (GDPGP1).